Consider the following 504-residue polypeptide: Maturase K (504 aa).

Belongs to the intron maturase 2 family. MatK subfamily.

It is found in the plastid. The protein resides in the chloroplast. In terms of biological role, usually encoded in the trnK tRNA gene intron. Probably assists in splicing its own and other chloroplast group II introns. The sequence is that of Maturase K from Actinidia chinensis (Kiwi).